Here is a 123-residue protein sequence, read N- to C-terminus: Small ribosomal subunit protein bS16 (123 aa).

Residues 86–123 (PVRAEQTKQPQPKAKAQQRAKDQAERDAAAAAEAAAGE) are disordered. Residues 93–102 (KQPQPKAKAQ) show a composition bias toward low complexity. Over residues 104–113 (RAKDQAERDA) the composition is skewed to basic and acidic residues. The segment covering 114–123 (AAAAEAAAGE) has biased composition (low complexity).

Belongs to the bacterial ribosomal protein bS16 family.

The protein is Small ribosomal subunit protein bS16 of Paramagnetospirillum magneticum (strain ATCC 700264 / AMB-1) (Magnetospirillum magneticum).